Reading from the N-terminus, the 396-residue chain is Elongation factor Tu (396 aa).

A tr-type G domain is found at 10–206 (KPHINVGTIG…ALDSYIPEPQ (197 aa)). The tract at residues 19–26 (GHVDHGKT) is G1. 19–26 (GHVDHGKT) serves as a coordination point for GTP. A Mg(2+)-binding site is contributed by Thr-26. Positions 60–64 (GITIN) are G2. Residues 81–84 (DCPG) form a G3 region. GTP-binding positions include 81–85 (DCPGH) and 136–139 (NKAD). Positions 136 to 139 (NKAD) are G4. A G5 region spans residues 174–176 (SAL).

It belongs to the TRAFAC class translation factor GTPase superfamily. Classic translation factor GTPase family. EF-Tu/EF-1A subfamily. As to quaternary structure, monomer.

The protein localises to the cytoplasm. The catalysed reaction is GTP + H2O = GDP + phosphate + H(+). Functionally, GTP hydrolase that promotes the GTP-dependent binding of aminoacyl-tRNA to the A-site of ribosomes during protein biosynthesis. The polypeptide is Elongation factor Tu (Nitrosospira multiformis (strain ATCC 25196 / NCIMB 11849 / C 71)).